Here is a 238-residue protein sequence, read N- to C-terminus: Transmembrane protein 127 (238 aa).

Met-1 is modified (N-acetylmethionine). A compositionally biased stretch (gly residues) spans 1–11 (MYAPGGAGLPG). Positions 1–27 (MYAPGGAGLPGGRRRRSPGGSALPKQP) are disordered. Ser-17 bears the Phosphoserine mark. The next 3 membrane-spanning stretches (helical) occupy residues 96–116 (IAAFCFLGILCSLSAFLLDVF), 130–150 (AFAHILTVLQCATVIGFSYWA), and 169–189 (VYVTFAVSFYLVAGAGGASIL).

This sequence belongs to the TMEM127 family. In terms of tissue distribution, widely expressed.

Its subcellular location is the cell membrane. The protein localises to the cytoplasm. Controls cell proliferation acting as a negative regulator of TOR signaling pathway mediated by mTORC1. May act as a tumor suppressor. In Homo sapiens (Human), this protein is Transmembrane protein 127 (TMEM127).